We begin with the raw amino-acid sequence, 68 residues long: Serine rich endogenous peptide 13 (68 aa).

Positions methionine 1–alanine 31 are cleaved as a signal peptide. Residues arginine 33–proline 68 form a disordered region. Positions glutamine 37–tyrosine 47 are enriched in basic and acidic residues. Residues proline 48 to leucine 57 show a composition bias toward pro residues. An SCOOP motif motif is present at residues proline 54–proline 68. A SxS motif essential for MIK2 binding motif is present at residues serine 60–serine 62.

The protein belongs to the serine rich endogenous peptide (SCOOP) phytocytokine family. Interacts with MIK2 (via extracellular leucine-rich repeat domain); this interaction triggers the formation of complex between MIK2 and the BAK1/SERK3 and SERK4 coreceptors, and subsequent BAK1 activation by phosphorylation. In terms of tissue distribution, mostly expressed in stems and flowers and, to a lower extent, in seedlings shoots, roots, siliques, seeds and leaves.

The protein localises to the cell membrane. The protein resides in the secreted. Its subcellular location is the extracellular space. It localises to the apoplast. Functionally, brassicaceae-specific phytocytokine (plant endogenous peptide released into the apoplast) perceived by MIK2 in a BAK1/SERK3 and SERK4 coreceptors-dependent manner, that modulates various physiological and antimicrobial processes including growth prevention and reactive oxygen species (ROS) response regulation. Promotes the expression of immune-related marker genes (e.g. WRKY30, WRKY33 and CYP81F2) in a MIK2-dependent manner. Inhibits root growth and regulates root meristems. Prevents general growth and development. Exhibits antibacterial effects against Pseudomonas syringae pv. tomato DC3000, Ralstonia solanacearum, Bacillus subtilis and Agrobacterium tumefaciens, thus being an antimicrobial peptide (AMP). The polypeptide is Serine rich endogenous peptide 13 (Arabidopsis thaliana (Mouse-ear cress)).